The following is a 400-amino-acid chain: Putative zinc-binding protein ORF78 (400 aa).

The segment at 9-33 is disordered; that stretch reads LPRKRRAVAQPRTRQPPPKVHREDT.

This is Putative zinc-binding protein ORF78 (ORF78) from Ictalurid herpesvirus 1 (strain Auburn) (IcHV-1).